We begin with the raw amino-acid sequence, 892 residues long: Chromodomain-helicase-DNA-binding protein 3 (892 aa).

The span at 1 to 20 (MSSKRGADPDWKTPGKASKD) shows a compositional bias: basic and acidic residues. The segment at 1–29 (MSSKRGADPDWKTPGKASKDKRPKTNAKK) is disordered. A PHD-type zinc finger spans residues 35-82 (EEYCKVCSDGGDLLCCDSCPSVYHRTCLSPPLKSIPKGDWICPRCIPL). 2 consecutive Chromo domains span residues 84-156 (GKAE…PSLE) and 179-240 (LLVQ…GRQR). Residues 279 to 458 (RYSWGQGIPT…FHLLNFLSSG (180 aa)) form the Helicase ATP-binding domain. 292-299 (DEMGLGKT) lines the ATP pocket. The DEAH box signature appears at 409-412 (DEAH). The Helicase C-terminal domain maps to 590–739 (LLSKMLKQLK…LTHLVVRPGM (150 aa)). Positions 839 to 892 (SQPKLPKKQKKQSQQSQVDVESIMGKGKRIRKEIDYSNQYPSPNRATPSSIVLM) are disordered. Positions 874–892 (YSNQYPSPNRATPSSIVLM) are enriched in polar residues.

This sequence belongs to the SNF2/RAD54 helicase family. In terms of assembly, monomer.

It is found in the nucleus. It localises to the chromosome. It catalyses the reaction ATP + H2O = ADP + phosphate + H(+). ATPase activity is stimulated by binding to DNA or nucleosomes, but is strongly activated by nucleosomes. Its function is as follows. ATP-dependent chromatin-remodeling factor which acts in nucleosome-remodeling by catalyzing ATP-dependent nucleosome mobilization. Likely to be involved in the regulation of transcription. The polypeptide is Chromodomain-helicase-DNA-binding protein 3 (Drosophila melanogaster (Fruit fly)).